The primary structure comprises 267 residues: GTP cyclohydrolase FolE2 2 (267 aa).

This sequence belongs to the GTP cyclohydrolase IV family.

It carries out the reaction GTP + H2O = 7,8-dihydroneopterin 3'-triphosphate + formate + H(+). It functions in the pathway cofactor biosynthesis; 7,8-dihydroneopterin triphosphate biosynthesis; 7,8-dihydroneopterin triphosphate from GTP: step 1/1. Its function is as follows. Converts GTP to 7,8-dihydroneopterin triphosphate. This is GTP cyclohydrolase FolE2 2 from Cupriavidus metallidurans (strain ATCC 43123 / DSM 2839 / NBRC 102507 / CH34) (Ralstonia metallidurans).